Here is a 331-residue protein sequence, read N- to C-terminus: Ketol-acid reductoisomerase (NADP(+)) (331 aa).

In terms of domain architecture, KARI N-terminal Rossmann spans 2 to 182; sequence AQLFYDSDAD…GGTRAGILET (181 aa). NADP(+) is bound by residues 25–28, Ser51, Ser53, and 83–86; these read YGSQ and DEFQ. The active site involves His108. Position 134 (Gly134) interacts with NADP(+). The region spanning 183 to 328 is the KARI C-terminal knotted domain; that stretch reads NFKEETETDL…KGLRSMFSWL (146 aa). Positions 191, 195, 227, and 231 each coordinate Mg(2+). Ser252 is a substrate binding site.

Belongs to the ketol-acid reductoisomerase family. Mg(2+) is required as a cofactor.

It carries out the reaction (2R)-2,3-dihydroxy-3-methylbutanoate + NADP(+) = (2S)-2-acetolactate + NADPH + H(+). The enzyme catalyses (2R,3R)-2,3-dihydroxy-3-methylpentanoate + NADP(+) = (S)-2-ethyl-2-hydroxy-3-oxobutanoate + NADPH + H(+). It participates in amino-acid biosynthesis; L-isoleucine biosynthesis; L-isoleucine from 2-oxobutanoate: step 2/4. It functions in the pathway amino-acid biosynthesis; L-valine biosynthesis; L-valine from pyruvate: step 2/4. Involved in the biosynthesis of branched-chain amino acids (BCAA). Catalyzes an alkyl-migration followed by a ketol-acid reduction of (S)-2-acetolactate (S2AL) to yield (R)-2,3-dihydroxy-isovalerate. In the isomerase reaction, S2AL is rearranged via a Mg-dependent methyl migration to produce 3-hydroxy-3-methyl-2-ketobutyrate (HMKB). In the reductase reaction, this 2-ketoacid undergoes a metal-dependent reduction by NADPH to yield (R)-2,3-dihydroxy-isovalerate. This chain is Ketol-acid reductoisomerase (NADP(+)), found in Parasynechococcus marenigrum (strain WH8102).